The primary structure comprises 1188 residues: DNA-directed RNA polymerase subunit beta (1188 aa).

Belongs to the RNA polymerase beta chain family. In terms of assembly, the RNAP catalytic core consists of 2 alpha, 1 beta, 1 beta' and 1 omega subunit. When a sigma factor is associated with the core the holoenzyme is formed, which can initiate transcription.

The enzyme catalyses RNA(n) + a ribonucleoside 5'-triphosphate = RNA(n+1) + diphosphate. Its function is as follows. DNA-dependent RNA polymerase catalyzes the transcription of DNA into RNA using the four ribonucleoside triphosphates as substrates. This Streptococcus sanguinis (strain SK36) protein is DNA-directed RNA polymerase subunit beta.